Reading from the N-terminus, the 387-residue chain is Formate-dependent phosphoribosylglycinamide formyltransferase (387 aa).

Residues 21–22 (EL) and Glu-81 each bind N(1)-(5-phospho-beta-D-ribosyl)glycinamide. ATP contacts are provided by residues Arg-113, Lys-154, 159–164 (SSGHGQ), 193–196 (EEFI), and Glu-201. The 189-residue stretch at 118–306 (TFAAEEVGVK…EFALHLRAVL (189 aa)) folds into the ATP-grasp domain. Mg(2+) is bound by residues Glu-265 and Glu-277. Residues Asp-284, Lys-352, and 359-360 (RR) contribute to the N(1)-(5-phospho-beta-D-ribosyl)glycinamide site.

This sequence belongs to the PurK/PurT family. Homodimer.

It catalyses the reaction N(1)-(5-phospho-beta-D-ribosyl)glycinamide + formate + ATP = N(2)-formyl-N(1)-(5-phospho-beta-D-ribosyl)glycinamide + ADP + phosphate + H(+). It functions in the pathway purine metabolism; IMP biosynthesis via de novo pathway; N(2)-formyl-N(1)-(5-phospho-D-ribosyl)glycinamide from N(1)-(5-phospho-D-ribosyl)glycinamide (formate route): step 1/1. In terms of biological role, involved in the de novo purine biosynthesis. Catalyzes the transfer of formate to 5-phospho-ribosyl-glycinamide (GAR), producing 5-phospho-ribosyl-N-formylglycinamide (FGAR). Formate is provided by PurU via hydrolysis of 10-formyl-tetrahydrofolate. In Wolinella succinogenes (strain ATCC 29543 / DSM 1740 / CCUG 13145 / JCM 31913 / LMG 7466 / NCTC 11488 / FDC 602W) (Vibrio succinogenes), this protein is Formate-dependent phosphoribosylglycinamide formyltransferase.